The sequence spans 778 residues: Serine/threonine-protein kinase BRSK1 (778 aa).

Residues 1-12 (MSSGSKEGGGGS) are compositionally biased toward gly residues. The disordered stretch occupies residues 1 to 29 (MSSGSKEGGGGSPAYHLPHPHPHPPQHAQ). The 252-residue stretch at 34–285 (YRLEKTLGKG…LEQIQKHPWY (252 aa)) folds into the Protein kinase domain. ATP-binding positions include 40 to 48 (LGKGQTGLV) and Lys-63. Catalysis depends on Asp-156, which acts as the Proton acceptor. Thr-189 is subject to Phosphothreonine; by LKB1. Position 193 is a phosphoserine (Ser-193). A UBA domain is found at 314–356 (ELDPDVLESMASLGCFRDRERLHRELRSEEENQEKMIYYLLLD). The segment covering 362-383 (PSCEDQDLPPRNDVDPPRKRVD) has biased composition (basic and acidic residues). A disordered region spans residues 362–548 (PSCEDQDLPP…SPGGGVGGAA (187 aa)). Phosphoserine is present on residues Ser-399, Ser-443, Ser-447, and Ser-450. The segment covering 430-457 (SRSVSGASTGLSSSPLSSPRSPVFSFSP) has biased composition (low complexity). Arg-466, Arg-481, Arg-484, and Arg-498 each carry omega-N-methylarginine. The span at 491-508 (QPPPPSARSTPLPGPPGS) shows a compositional bias: pro residues. Ser-508 carries the phosphoserine modification. Residues 509–533 (PRSSGGTPLHSPLHTPRASPTGTPG) show a composition bias toward low complexity. Arg-525 is subject to Omega-N-methylarginine. A phosphothreonine mark is found at Thr-529 and Thr-535. Position 550 is an omega-N-methylarginine (Arg-550). Thr-583 carries the post-translational modification Phosphothreonine. Phosphoserine is present on residues Ser-586, Ser-587, and Ser-601. A disordered region spans residues 719-778 (QPSVQALADEKNGAQTRPAGTPPRSLQPPPGRPDPDLSSSPRRGPSKDKKLLATNGTPLP).

It belongs to the protein kinase superfamily. CAMK Ser/Thr protein kinase family. SNF1 subfamily. It depends on Mg(2+) as a cofactor. Post-translationally, phosphorylated at Thr-189 by STK11/LKB1 in complex with STE20-related adapter-alpha (STRADA) pseudo kinase and CAB39. Not phosphorylated at Thr-189 by CaMKK2. In contrast, it is phosphorylated and activated by CaMKK1. May be inactivated via dephosphorylation of Thr-189 by PP2C. May be autophosphorylated. In terms of tissue distribution, mainly present in brain. Present in presynaptic nerve terminals (at protein level).

Its subcellular location is the cytoplasm. It localises to the nucleus. The protein resides in the cytoskeleton. It is found in the microtubule organizing center. The protein localises to the centrosome. Its subcellular location is the synapse. It localises to the presynaptic active zone. The protein resides in the cytoplasmic vesicle. It is found in the secretory vesicle. The protein localises to the synaptic vesicle. It carries out the reaction L-seryl-[protein] + ATP = O-phospho-L-seryl-[protein] + ADP + H(+). The enzyme catalyses L-threonyl-[protein] + ATP = O-phospho-L-threonyl-[protein] + ADP + H(+). It catalyses the reaction L-seryl-[tau protein] + ATP = O-phospho-L-seryl-[tau protein] + ADP + H(+). The catalysed reaction is L-threonyl-[tau protein] + ATP = O-phospho-L-threonyl-[tau protein] + ADP + H(+). Its activity is regulated as follows. Activated by phosphorylation on Thr-189 by STK11/LKB1. Its function is as follows. Serine/threonine-protein kinase that plays a key role in polarization of neurons and centrosome duplication. Phosphorylates CDC25B, CDC25C, MAPT/TAU, RIMS1, TUBG1, TUBG2 and WEE1. Following phosphorylation and activation by STK11/LKB1, acts as a key regulator of polarization of cortical neurons, probably by mediating phosphorylation of microtubule-associated proteins such as MAPT/TAU at 'Thr-523' and 'Ser-573'. Also regulates neuron polarization by mediating phosphorylation of WEE1 at 'Ser-642' in postmitotic neurons, leading to down-regulate WEE1 activity in polarized neurons. Also acts as a positive regulator of centrosome duplication by mediating phosphorylation of gamma-tubulin (TUBG1 and TUBG2) at 'Ser-131', leading to translocation of gamma-tubulin and its associated proteins to the centrosome. Involved in the UV-induced DNA damage checkpoint response, probably by inhibiting CDK1 activity through phosphorylation and activation of WEE1, and inhibition of CDC25B and CDC25C. In neurons, localizes to synaptic vesicles and plays a role in neurotransmitter release, possibly by phosphorylating RIMS1. The protein is Serine/threonine-protein kinase BRSK1 (Brsk1) of Rattus norvegicus (Rat).